Reading from the N-terminus, the 386-residue chain is Formate-dependent phosphoribosylglycinamide formyltransferase (386 aa).

Residues 15-16 (EL) and glutamate 75 contribute to the N(1)-(5-phospho-beta-D-ribosyl)glycinamide site. ATP contacts are provided by residues arginine 107, lysine 148, 153–158 (SSGKGQ), 188–191 (EQFI), and glutamate 196. Residues 112 to 301 (ALAVQQLNLQ…EFELHLRAIV (190 aa)) enclose the ATP-grasp domain. The Mg(2+) site is built by glutamate 260 and glutamate 272. Residues aspartate 279, lysine 349, and 356–357 (RR) each bind N(1)-(5-phospho-beta-D-ribosyl)glycinamide.

This sequence belongs to the PurK/PurT family. In terms of assembly, homodimer.

It catalyses the reaction N(1)-(5-phospho-beta-D-ribosyl)glycinamide + formate + ATP = N(2)-formyl-N(1)-(5-phospho-beta-D-ribosyl)glycinamide + ADP + phosphate + H(+). It participates in purine metabolism; IMP biosynthesis via de novo pathway; N(2)-formyl-N(1)-(5-phospho-D-ribosyl)glycinamide from N(1)-(5-phospho-D-ribosyl)glycinamide (formate route): step 1/1. Its function is as follows. Involved in the de novo purine biosynthesis. Catalyzes the transfer of formate to 5-phospho-ribosyl-glycinamide (GAR), producing 5-phospho-ribosyl-N-formylglycinamide (FGAR). Formate is provided by PurU via hydrolysis of 10-formyl-tetrahydrofolate. This chain is Formate-dependent phosphoribosylglycinamide formyltransferase, found in Francisella tularensis subsp. holarctica (strain LVS).